The chain runs to 579 residues: Suppressor of cytokine signaling 7 (579 aa).

Disordered regions lie at residues 1 to 25, 89 to 270, and 295 to 315; these read MVFR…GPSE, PPPP…RTQS, and QRGL…RSLS. 3 stretches are compositionally biased toward pro residues: residues 89–99, 155–165, and 185–196; these read PPPPQPPPPAA, PPGPELPPVPF, and QPPPPPPPPGPL. The mediates interaction with SORBS3 stretch occupies residues 124-492; that stretch reads AESLETNSCS…GKFLYFLRSR (369 aa). The segment covering 206–217 has biased composition (basic residues); the sequence is GSFKIRLSRLFR. The segment covering 301–311 has biased composition (pro residues); that stretch reads PHPPTPPPPPR. An SH2 domain is found at 398 to 507; that stretch reads WYWGPMNWED…PTPVQLLYPV (110 aa). The SOCS box domain maps to 502-552; that stretch reads QLLYPVSRFSNVKSLQHLCRFRIRQLVRIDHIPDLPLPKPLISYIRKFYYY.

As to quaternary structure, substrate-recognition component of the ECS(SOCS7) complex, composed of SOCS7, CUL5, ELOB, ELOC and RNF7/RBX2. Interacts, via the third proline-rich region, with the second SH3 domain of the adapter protein NCK1. Also interacts with GRB2, INSR, PLCG1, SORBS3/vinexin, and phosphorylated STAT3 and STAT5. Interacts with SEPT6. Interacts with phosphorylated IRS4 and PIK3R1. In terms of tissue distribution, widely expressed with higher expression in brain and testis where it is expressed by spermatocytes and early spermatids. Also significantly expressed in spleen, skeletal muscle and kidney.

The protein localises to the cytoplasm. It is found in the nucleus. Its subcellular location is the cell membrane. It participates in protein modification; protein ubiquitination. Its function is as follows. Substrate-recognition component of a cullin-5-RING E3 ubiquitin-protein ligase complex (ECS complex, also named CRL5 complex), which mediates the ubiquitination and subsequent proteasomal degradation of target proteins, such as DAB1 and IRS1. Specifically recognizes and binds phosphorylated proteins via its SH2 domain, promoting their ubiquitination. The ECS(SOCS7) complex acts as a key regulator of reelin signaling by mediating ubiquitination and degradation of phosphorylated DAB1 in the cortical plate of the developing cerebral cortex, thereby regulating neuron positioning during cortex development. Functions in insulin signaling and glucose homeostasis through IRS1 ubiquitination and subsequent proteasomal degradation. Also inhibits prolactin, growth hormone and leptin signaling by preventing STAT3 and STAT5 activation, sequestering them in the cytoplasm and reducing their binding to DNA. The chain is Suppressor of cytokine signaling 7 from Mus musculus (Mouse).